The following is a 442-amino-acid chain: Tubulin beta chain (442 aa).

GTP-binding residues include glutamine 11, glutamate 67, serine 136, glycine 140, threonine 141, glycine 142, and asparagine 202. A Mg(2+)-binding site is contributed by glutamate 67.

Belongs to the tubulin family. In terms of assembly, dimer of alpha and beta chains. A typical microtubule is a hollow water-filled tube with an outer diameter of 25 nm and an inner diameter of 15 nM. Alpha-beta heterodimers associate head-to-tail to form protofilaments running lengthwise along the microtubule wall with the beta-tubulin subunit facing the microtubule plus end conferring a structural polarity. Microtubules usually have 13 protofilaments but different protofilament numbers can be found in some organisms and specialized cells. The cofactor is Mg(2+).

It localises to the cytoplasm. It is found in the cytoskeleton. Functionally, tubulin is the major constituent of microtubules, a cylinder consisting of laterally associated linear protofilaments composed of alpha- and beta-tubulin heterodimers. Microtubules grow by the addition of GTP-tubulin dimers to the microtubule end, where a stabilizing cap forms. Below the cap, tubulin dimers are in GDP-bound state, owing to GTPase activity of alpha-tubulin. The sequence is that of Tubulin beta chain (TUBB) from Euglena gracilis.